The following is a 119-amino-acid chain: Protein FAM24A-like (119 aa).

The N-terminal stretch at 1-40 is a signal peptide; sequence MYKPFDLRTIITIIIGCGILTAMFLLIGLVLCLYSKISKA.

The protein belongs to the FAM24 family.

The protein resides in the secreted. The chain is Protein FAM24A-like from Mus musculus (Mouse).